Reading from the N-terminus, the 398-residue chain is Enoyl-[acyl-carrier-protein] reductase [NADH] (398 aa).

NAD(+) contacts are provided by residues 48–53 (GASTGY), 74–75 (FE), 111–112 (DG), and 139–140 (LA). Y225 is a substrate binding site. Y235 acts as the Proton donor in catalysis. Residues K244 and 273-275 (VVT) each bind NAD(+).

This sequence belongs to the TER reductase family. As to quaternary structure, monomer.

The enzyme catalyses a 2,3-saturated acyl-[ACP] + NAD(+) = a (2E)-enoyl-[ACP] + NADH + H(+). It participates in lipid metabolism; fatty acid biosynthesis. Functionally, involved in the final reduction of the elongation cycle of fatty acid synthesis (FAS II). Catalyzes the reduction of a carbon-carbon double bond in an enoyl moiety that is covalently linked to an acyl carrier protein (ACP). The sequence is that of Enoyl-[acyl-carrier-protein] reductase [NADH] from Variovorax paradoxus (strain S110).